The chain runs to 92 residues: Sperm-specific protein Phi-1 (92 aa).

The interval 1–92 is disordered; it reads MPSPTRRSSK…RVRAKKKKKK (92 aa). 2 stretches are compositionally biased toward basic residues: residues 7–19 and 29–92; these read RSSKSRSKSRSRS and AAKR…KKKK.

Sperm.

It is found in the nucleus. The protein resides in the chromosome. In terms of biological role, involved in nuclear basic protein transition: histones are replaced by spermatid specific proteins which are themselves replaced by protamines in late spermatids. The sequence is that of Sperm-specific protein Phi-1 from Mytilus edulis (Blue mussel).